Reading from the N-terminus, the 111-residue chain is Fertilization-influencing membrane protein (111 aa).

The N-terminal stretch at Met1–Thr23 is a signal peptide. A helical membrane pass occupies residues Ile85–Val105.

In terms of tissue distribution, testis-specific.

It localises to the cell membrane. The protein localises to the secreted. Plays a role in sperm-oocyte fusion process during fertilization. The chain is Fertilization-influencing membrane protein from Mus musculus (Mouse).